The primary structure comprises 409 residues: Serine/threonine transporter SstT (409 aa).

Helical transmembrane passes span 24–44, 48–68, 82–102, 142–162, 194–214, 218–238, 292–312, and 319–339; these read LALG…AGLF, FVGA…AATI, IIVL…IAGM, AIAN…GAAL, LGIF…ALAG, LLAV…PAIV, IPLG…VLAM, and GITV…VSAC.

This sequence belongs to the dicarboxylate/amino acid:cation symporter (DAACS) (TC 2.A.23) family.

It is found in the cell inner membrane. It carries out the reaction L-serine(in) + Na(+)(in) = L-serine(out) + Na(+)(out). It catalyses the reaction L-threonine(in) + Na(+)(in) = L-threonine(out) + Na(+)(out). Involved in the import of serine and threonine into the cell, with the concomitant import of sodium (symport system). The protein is Serine/threonine transporter SstT of Neisseria meningitidis serogroup B (strain ATCC BAA-335 / MC58).